Reading from the N-terminus, the 360-residue chain is UDP-3-O-acylglucosamine N-acyltransferase (360 aa).

Histidine 256 (proton acceptor) is an active-site residue. The disordered stretch occupies residues 341–360 (EGSGAETAARPDDDRDEGRG). Residues 349–360 (ARPDDDRDEGRG) show a composition bias toward basic and acidic residues.

This sequence belongs to the transferase hexapeptide repeat family. LpxD subfamily. As to quaternary structure, homotrimer.

The catalysed reaction is a UDP-3-O-[(3R)-3-hydroxyacyl]-alpha-D-glucosamine + a (3R)-hydroxyacyl-[ACP] = a UDP-2-N,3-O-bis[(3R)-3-hydroxyacyl]-alpha-D-glucosamine + holo-[ACP] + H(+). It functions in the pathway bacterial outer membrane biogenesis; LPS lipid A biosynthesis. In terms of biological role, catalyzes the N-acylation of UDP-3-O-acylglucosamine using 3-hydroxyacyl-ACP as the acyl donor. Is involved in the biosynthesis of lipid A, a phosphorylated glycolipid that anchors the lipopolysaccharide to the outer membrane of the cell. The polypeptide is UDP-3-O-acylglucosamine N-acyltransferase (Rhodopseudomonas palustris (strain TIE-1)).